The chain runs to 328 residues: Cytosolic Fe-S cluster assembly factor NBP35 (328 aa).

Residues Cys-27, Cys-41, Cys-44, and Cys-50 each coordinate [4Fe-4S] cluster. 80–87 (GKGGVGKS) lines the ATP pocket. [4Fe-4S] cluster contacts are provided by Cys-253 and Cys-256.

Belongs to the Mrp/NBP35 ATP-binding proteins family. NUBP1/NBP35 subfamily. In terms of assembly, heterotetramer of 2 NBP35 and 2 CFD1 chains. Requires [4Fe-4S] cluster as cofactor.

It is found in the cytoplasm. It localises to the nucleus. Its function is as follows. Component of the cytosolic iron-sulfur (Fe/S) protein assembly (CIA) machinery. Required for maturation of extramitochondrial Fe-S proteins. The NBP35-CFD1 heterotetramer forms a Fe-S scaffold complex, mediating the de novo assembly of an Fe-S cluster and its transfer to target apoproteins. Required for biogenesis and export of both ribosomal subunits, which may reflect a role in assembly of the Fe/S clusters in RLI1, a protein which performs rRNA processing and ribosome export. The polypeptide is Cytosolic Fe-S cluster assembly factor NBP35 (Saccharomyces cerevisiae (strain ATCC 204508 / S288c) (Baker's yeast)).